A 203-amino-acid chain; its full sequence is Na(+)-translocating NADH-quinone reductase subunit E (203 aa).

6 consecutive transmembrane segments (helical) span residues 11 to 31 (SIFIENMALSFFLGMCTFLAV), 35 to 55 (ISTAIGLGTAVIVVQTLTVPL), 82 to 102 (FLGLIAYIGVIAAVVQILEMF), 115 to 135 (GIFLPLITVNCAILAGSLFMV), 145 to 165 (MVYGVGSGVGWALAIAVMAGV), and 181 to 201 (LGITFITAGLMAIGFMSFSGI).

The protein belongs to the NqrDE/RnfAE family. Composed of six subunits; NqrA, NqrB, NqrC, NqrD, NqrE and NqrF.

The protein localises to the cell inner membrane. The enzyme catalyses a ubiquinone + n Na(+)(in) + NADH + H(+) = a ubiquinol + n Na(+)(out) + NAD(+). In terms of biological role, NQR complex catalyzes the reduction of ubiquinone-1 to ubiquinol by two successive reactions, coupled with the transport of Na(+) ions from the cytoplasm to the periplasm. NqrA to NqrE are probably involved in the second step, the conversion of ubisemiquinone to ubiquinol. The protein is Na(+)-translocating NADH-quinone reductase subunit E of Dichelobacter nodosus (strain VCS1703A).